The chain runs to 423 residues: Putative competence-damage inducible protein (423 aa).

Belongs to the CinA family.

The protein is Putative competence-damage inducible protein of Streptococcus pyogenes serotype M2 (strain MGAS10270).